A 637-amino-acid polypeptide reads, in one-letter code: Acetolactate synthase 2, chloroplastic (637 aa).

Residues 1 to 73 constitute a chloroplast transit peptide; the sequence is MASFSFFGTI…SSKYAPNVPR (73 aa). The tract at residues 35–69 is disordered; sequence RRATRVSVSANSKKDQDRTASRRENPSTFSSKYAP. Residues 46 to 59 are compositionally biased toward basic and acidic residues; that stretch reads SKKDQDRTASRREN. E120 contacts thiamine diphosphate. FAD contacts are provided by residues R222, 329–350, and 372–391; these read HGTV…FGVR and DIDS…VCCD. The tract at residues 462-542 is thiamine pyrophosphate binding; it reads QHQMWAAQFY…VKVLLINNQH (81 aa). Mg(2+)-binding residues include D513 and N540.

The protein belongs to the TPP enzyme family. The cofactor is Mg(2+). Thiamine diphosphate serves as cofactor.

It localises to the plastid. Its subcellular location is the chloroplast. The catalysed reaction is 2 pyruvate + H(+) = (2S)-2-acetolactate + CO2. Its pathway is amino-acid biosynthesis; L-isoleucine biosynthesis; L-isoleucine from 2-oxobutanoate: step 1/4. It participates in amino-acid biosynthesis; L-valine biosynthesis; L-valine from pyruvate: step 1/4. The polypeptide is Acetolactate synthase 2, chloroplastic (Brassica napus (Rape)).